Consider the following 833-residue polypeptide: Patatin-like phospholipase domain-containing protein SNOG_00918 (833 aa).

Disordered stretches follow at residues 1 to 20 (MTDV…SAFD) and 49 to 71 (HLSP…SANN). A helical membrane pass occupies residues 108-128 (WPLLVVVLGWLLFLSIAYVFT). Positions 301-457 (LCLSGGATFA…RTDIPLKALN (157 aa)) constitute a PNPLA domain. Residues 332–336 (GTSGG) carry the GXSXG motif. Ser-334 functions as the Nucleophile in the catalytic mechanism. Catalysis depends on Asp-444, which acts as the Proton acceptor. Disordered regions lie at residues 630–657 (TKSK…FSRP) and 680–833 (LRTD…GKGL). A compositionally biased stretch (low complexity) spans 644-655 (SGSESSSSADFS). The span at 689 to 707 (DTPNSPSLSARLTGWWNTK) shows a compositional bias: polar residues. 3 stretches are compositionally biased toward basic and acidic residues: residues 740-750 (RPPKEVRDLQA), 759-769 (RNSDFLEEIRR), and 782-794 (DEGR…RGDV). Positions 809–819 (EFGDNEGDGEE) are enriched in acidic residues.

This sequence belongs to the PLPL family.

It localises to the membrane. Probable lipid hydrolase. The chain is Patatin-like phospholipase domain-containing protein SNOG_00918 from Phaeosphaeria nodorum (strain SN15 / ATCC MYA-4574 / FGSC 10173) (Glume blotch fungus).